An 899-amino-acid polypeptide reads, in one-letter code: Core protein VP3 (899 aa).

The segment at 1–21 (MADPPDANVPKTSPYLKGDEL) is disordered.

The protein belongs to the orbivirus VP3 family.

It is found in the virion. Functionally, the VP3 protein is one of the five proteins (with VP1, VP4, VP6 and VP7) which form the inner capsid of the virus. The sequence is that of Core protein VP3 (Segment-3) from Epizootic hemorrhagic disease virus 1 (EHDV-1).